The sequence spans 960 residues: Lon protease homolog, mitochondrial (960 aa).

The N-terminal 56 residues, 1-56, are a transit peptide targeting the mitochondrion; the sequence is MYRAGALVLRSATLRRTRFLAAHQNFATISSQRSSVLLAKSLESSIGGAGNQKKFY. The Lon N-terminal domain maps to 92–352; that stretch reads VPILAINRYP…IALLLIQKEK (261 aa). A disordered region spans residues 195–250; the sequence is PKTDTPLNGRRARGKRAGLPPTPPPTPPLSTPTSAPEASATSPEEKEEKKDPERKG. Residues 214-224 show a composition bias toward pro residues; sequence PPTPPPTPPLS. The span at 225-236 shows a compositional bias: low complexity; the sequence is TPTSAPEASATS. Residues 237 to 250 show a composition bias toward basic and acidic residues; that stretch reads PEEKEEKKDPERKG. ATP is bound at residue 505 to 512; sequence GPPGVGKT. Residues 712–748 form a disordered region; that stretch reads EQQPEDEQPAATTAISENSDAEPVSTPSDPPTFTPEK. The region spanning 773–960 is the Lon proteolytic domain; that stretch reads VTPPGVIMGL…YDELYEHLFQ (188 aa). Catalysis depends on residues S867 and K910.

It belongs to the peptidase S16 family. In terms of assembly, homohexamer or homoheptamer. Organized in a ring with a central cavity.

The protein localises to the mitochondrion matrix. The enzyme catalyses Hydrolysis of proteins in presence of ATP.. In terms of biological role, ATP-dependent serine protease that mediates the selective degradation of misfolded, unassembled or oxidatively damaged polypeptides as well as certain short-lived regulatory proteins in the mitochondrial matrix. May also have a chaperone function in the assembly of inner membrane protein complexes. Participates in the regulation of mitochondrial gene expression and in the maintenance of the integrity of the mitochondrial genome. Binds to mitochondrial DNA in a site-specific manner. This is Lon protease homolog, mitochondrial from Caenorhabditis briggsae.